The chain runs to 486 residues: MAVQPTRIGLAGLAVMGQNLALNIAEKGFPISVYNRTTSKVDETVERAKKEGNLPLYGFHDPESFVKSIQKPRVIIMLVKAGSPVDQTIKTLSAYLEKGDCIVDGGNEWYENTERREKAVAENGFLYLGMGVSGGEEGARNGPSMMPGGSYEAYKNIEDIVLKVAAQVRDSGPCVTYIGKGGSGNFVKMVHNGIEYGDMQLIAEAYDVLKSVGKLSNEELHSVFSDWNKGELESFLVEITADIFGIKDDKGDGHLVDKVLDKTGMKGTGKWTVQQAAELSVPAPTIESSLDARFLSGLKDERVQAAKVFKAGGFGDILTDQKVDKKQLVDDVRKALYASKICSYAQGMNLIRAKSIEKGWGLKLGELARIWKGGCIIRAIFLDRIKQAYDRNAELANLLVDPEFAKEIIERQSAWRRVVCLAINSGISTPGMSASLAYFDSYRRERLPANLVQAQRDYFGAHTYERTDVEGSFHTEWFKIARQSKI.

Residues 12 to 17 (GLAVMG), 35 to 37 (NRT), 79 to 81 (VKA), and N107 contribute to the NADP(+) site. Residues N107 and 133-135 (SGG) contribute to the substrate site. K188 acts as the Proton acceptor in catalysis. 191 to 192 (HN) is a substrate binding site. E195 acts as the Proton donor in catalysis. Residues Y196, K266, R293, R456, and H462 each contribute to the substrate site. The Microbody targeting signal signature appears at 484 to 486 (SKI).

It belongs to the 6-phosphogluconate dehydrogenase family. In terms of assembly, forms homodimer. Forms heterodimers with PGD1 or PGD3.

Its subcellular location is the cytoplasm. The protein localises to the cytosol. It is found in the peroxisome. It catalyses the reaction 6-phospho-D-gluconate + NADP(+) = D-ribulose 5-phosphate + CO2 + NADPH. It functions in the pathway carbohydrate degradation; pentose phosphate pathway; D-ribulose 5-phosphate from D-glucose 6-phosphate (oxidative stage): step 3/3. In terms of biological role, catalyzes the oxidative decarboxylation of 6-phosphogluconate to ribulose 5-phosphate and CO(2), with concomitant reduction of NADP to NADPH. Required for guided growth of the male gametophytes and interaction between the pollen tube and the ovule. In Arabidopsis thaliana (Mouse-ear cress), this protein is 6-phosphogluconate dehydrogenase, decarboxylating 2.